The sequence spans 682 residues: Connectin (682 aa).

Positions 1–24 (MATLADSAICFLLLSLLLIGACLV) are cleaved as a signal peptide. Residues 29–54 (GRAKDDRRTRGRGSSSGVLSSSSSSS) form a disordered region. A compositionally biased stretch (low complexity) spans 40 to 54 (RGSSSGVLSSSSSSS). LRR repeat units lie at residues 149-172 (LREL…IIEP), 173-196 (LKNL…AFAN), 199-220 (FLER…AFAN), 223-244 (RLRE…AFRN), 247-268 (LCER…LFAD), 271-292 (RLTF…IFRG), 295-316 (NLNV…VFAE), 319-342 (SLSE…DGLN), 343-364 (TLKT…LLRG), 367-388 (ALLS…TFQP), and 389-404 (IMDN…LVSD). The LRRCT domain maps to 405 to 462 (NKFICDCRLQWIFELKNRTRHLQLRDSLEDLHCTLQEPKLSHFVDPVPPTILDVLNIG). The interval 503-536 (RQALRGQRQFASSAENVVESKMRRRRKRQEEVKE) is disordered. Ala658 carries GPI-anchor amidated alanine lipidation. The propeptide at 659 to 682 (GANSLAQGMTIIVSLVALMMISRG) is removed in mature form.

In terms of tissue distribution, predominantly expressed in abdominal and thoracic segment muscle and motorneuron cells.

Its subcellular location is the cell membrane. Cell adhesion protein involved in target recognition during neuromuscular development. Mediates homophilic cellular adhesion. The protein is Connectin (Con) of Drosophila melanogaster (Fruit fly).